Reading from the N-terminus, the 605-residue chain is Terpenoid synthase 18 (605 aa).

Mg(2+) is bound by residues Asp-356, Asp-360, Asn-500, Thr-504, and Glu-508. The short motif at 356 to 360 is the DDXXD motif element; it reads DDTYD.

This sequence belongs to the terpene synthase family. Tpsa subfamily. It depends on Mg(2+) as a cofactor. Mn(2+) is required as a cofactor. In terms of tissue distribution, predominantly expressed in flowers and siliques but also in roots and leaves.

It localises to the cytoplasm. It participates in secondary metabolite biosynthesis; terpenoid biosynthesis. The chain is Terpenoid synthase 18 (TPS18) from Arabidopsis thaliana (Mouse-ear cress).